Here is a 162-residue protein sequence, read N- to C-terminus: Malaria protein EXP-1 (162 aa).

The signal sequence occupies residues 1-22; sequence MKILSVFFLVLFFIIFNKESLA. The chain crosses the membrane as a helical span at residues 80–101; sequence VLAGLLGVVSTVLLGGVGLVLY. Residues 109 to 162 are disordered; sequence PFKIGSSDPADNANPDADSESNGEPNADPQVTAQDVTPEQPQGDDNNLVSGPEH. Over residues 114 to 130 the composition is skewed to low complexity; the sequence is SSDPADNANPDADSESN. The segment at 120–137 is epitope (deduced); sequence NANPDADSESNGEPNADP. The segment covering 137–162 has biased composition (polar residues); the sequence is PQVTAQDVTPEQPQGDDNNLVSGPEH.

The protein resides in the parasitophorous vacuole membrane. This is Malaria protein EXP-1 (EXP-1) from Plasmodium falciparum.